Here is a 236-residue protein sequence, read N- to C-terminus: UPF0502 protein Bxeno_B1639 (236 aa).

This sequence belongs to the UPF0502 family.

The protein is UPF0502 protein Bxeno_B1639 of Paraburkholderia xenovorans (strain LB400).